A 286-amino-acid chain; its full sequence is ATP synthase gamma chain (286 aa).

This sequence belongs to the ATPase gamma chain family. In terms of assembly, F-type ATPases have 2 components, CF(1) - the catalytic core - and CF(0) - the membrane proton channel. CF(1) has five subunits: alpha(3), beta(3), gamma(1), delta(1), epsilon(1). CF(0) has three main subunits: a, b and c.

It localises to the cell inner membrane. Produces ATP from ADP in the presence of a proton gradient across the membrane. The gamma chain is believed to be important in regulating ATPase activity and the flow of protons through the CF(0) complex. The chain is ATP synthase gamma chain from Shewanella sp. (strain MR-4).